Consider the following 186-residue polypeptide: uncharacterized protein (186 aa).

Residue asparagine 34 is glycosylated (N-linked (GlcNAc...) asparagine; by host). A run of 3 helical transmembrane segments spans residues 47–67 (IGMV…ATTF), 114–134 (ILET…IVLL), and 144–164 (LEMI…TLFF).

It is found in the membrane. This is an uncharacterized protein from Acanthamoeba polyphaga mimivirus (APMV).